The primary structure comprises 435 residues: Ribosomal protein uS12 methylthiotransferase RimO (435 aa).

Residues K2 to Y118 enclose the MTTase N-terminal domain. Positions 11, 47, 81, 150, 154, and 157 each coordinate [4Fe-4S] cluster. The Radical SAM core domain occupies I136–N364. The TRAM domain occupies E367–E435.

The protein belongs to the methylthiotransferase family. RimO subfamily. It depends on [4Fe-4S] cluster as a cofactor.

Its subcellular location is the cytoplasm. It carries out the reaction L-aspartate(89)-[ribosomal protein uS12]-hydrogen + (sulfur carrier)-SH + AH2 + 2 S-adenosyl-L-methionine = 3-methylsulfanyl-L-aspartate(89)-[ribosomal protein uS12]-hydrogen + (sulfur carrier)-H + 5'-deoxyadenosine + L-methionine + A + S-adenosyl-L-homocysteine + 2 H(+). Catalyzes the methylthiolation of an aspartic acid residue of ribosomal protein uS12. This chain is Ribosomal protein uS12 methylthiotransferase RimO, found in Petrotoga mobilis (strain DSM 10674 / SJ95).